We begin with the raw amino-acid sequence, 426 residues long: Serine hydroxymethyltransferase (426 aa).

Residues leucine 115 and 119–121 (GHI) each bind (6S)-5,6,7,8-tetrahydrofolate. Lysine 225 carries the post-translational modification N6-(pyridoxal phosphate)lysine.

The protein belongs to the SHMT family. As to quaternary structure, homodimer. Pyridoxal 5'-phosphate is required as a cofactor.

Its subcellular location is the cytoplasm. It participates in amino-acid biosynthesis; glycine biosynthesis; glycine from L-serine: step 1/1. Its function is as follows. Catalyzes the reversible interconversion of serine and glycine with a modified folate serving as the one-carbon carrier. Also exhibits a pteridine-independent aldolase activity toward beta-hydroxyamino acids, producing glycine and aldehydes, via a retro-aldol mechanism. The protein is Serine hydroxymethyltransferase of Thermoplasma acidophilum (strain ATCC 25905 / DSM 1728 / JCM 9062 / NBRC 15155 / AMRC-C165).